Consider the following 835-residue polypeptide: Cap-specific mRNA (nucleoside-2'-O-)-methyltransferase 1 (835 aa).

The segment at 1 to 67 (MKRRTDPECT…EGKQHSSDSF (67 aa)) is disordered. The Bipartite nuclear localization signal signature appears at 2 to 19 (KRRTDPECTAPIKKQKKR). Phosphoserine is present on residues Ser28, Ser31, Ser53, Ser66, and Ser91. Over residues 37-54 (SSVSHGAKASTTSLSGSD) the composition is skewed to polar residues. The span at 57–67 (TEGKQHSSDSF) shows a compositional bias: basic and acidic residues. A G-patch domain is found at 87 to 133 (YNSVSQKLMAKMGFREGEGLGKYSQGRKDIVEASSQKGRRGLGLTLR). At Lys108 the chain carries N6-acetyllysine. Substrate is bound by residues 203 to 207 (KSVFD) and Arg218. The 220-residue stretch at 231–450 (FFLNRAAMKM…ERYVVCKGLK (220 aa)) folds into the RrmJ-type SAM-dependent 2'-O-MTase domain. Asn234 contacts S-adenosyl-L-methionine. The active site involves Lys239. Residues 277-283 (CAGPGGF) and 335-336 (DI) contribute to the S-adenosyl-L-methionine site. Residue Asp364 is part of the active site. 374-376 (NLQ) contacts substrate. The Proton acceptor role is filled by Lys404. Residue Asn439 participates in substrate binding. Positions 727–835 (SSGTPKLSYT…VLSFIQMHRA (109 aa)) are interaction with POLR2A. The region spanning 752–786 (RTVNEPWTMGFSKSFKKKFFYNKKTKDSTFDLPAD) is the WW domain.

As to quaternary structure, interacts with POLR2A (via C-terminus).

It is found in the nucleus. It carries out the reaction a 5'-end (N(7)-methyl 5'-triphosphoguanosine)-ribonucleoside in mRNA + S-adenosyl-L-methionine = a 5'-end (N(7)-methyl 5'-triphosphoguanosine)-(2'-O-methyl-ribonucleoside) in mRNA + S-adenosyl-L-homocysteine + H(+). Functionally, S-adenosyl-L-methionine-dependent methyltransferase that mediates mRNA cap1 2'-O-ribose methylation to the 5'-cap structure of mRNAs. Methylates the ribose of the first nucleotide of a m(7)GpppG-capped mRNA and small nuclear RNA (snRNA) to produce m(7)GpppRm (cap1). Displays a preference for cap0 transcripts. Cap1 modification is linked to higher levels of translation. May be involved in the interferon response pathway. In Homo sapiens (Human), this protein is Cap-specific mRNA (nucleoside-2'-O-)-methyltransferase 1 (CMTR1).